The primary structure comprises 107 residues: ATPase inhibitor, mitochondrial (107 aa).

Residues 1–25 (MAGSALAVRARLGVWGMRVLQTRGF) constitute a mitochondrion transit peptide. Residues 25–58 (FGSDSSESMDSGAGSIREAGGAFGKREKAEEDRY) form a disordered region. The N-terminal inhibitory region stretch occupies residues 26 to 52 (GSDSSESMDSGAGSIREAGGAFGKREK). Serine 39 is modified (phosphoserine). Basic and acidic residues predominate over residues 48–58 (GKREKAEEDRY). Residues 60–107 (REKTREQLAALKKHHEDEIDHHSKEIERLQKQIERHKKKIKYLKNSEH) adopt a coiled-coil conformation. The tract at residues 74 to 106 (HEDEIDHHSKEIERLQKQIERHKKKIKYLKNSE) is antiparallel alpha-helical coiled coil region. Lysine 103 carries the post-translational modification N6-succinyllysine.

The protein belongs to the ATPase inhibitor family. In terms of assembly, homodimer; represents the active form and is present at a pH value below 6.5. Homotetramer; represents the inactive form and is present at a pH value above 7.0.

It localises to the mitochondrion. Functionally, endogenous F(1)F(o)-ATPase inhibitor limiting ATP depletion when the mitochondrial membrane potential falls below a threshold and the F(1)F(o)-ATP synthase starts hydrolyzing ATP to pump protons out of the mitochondrial matrix. Required to avoid the consumption of cellular ATP when the F(1)F(o)-ATP synthase enzyme acts as an ATP hydrolase. Indirectly acts as a regulator of heme synthesis in erythroid tissues: regulates heme synthesis by modulating the mitochondrial pH and redox potential, allowing FECH to efficiently catalyze the incorporation of iron into protoporphyrin IX to produce heme. The chain is ATPase inhibitor, mitochondrial from Rattus norvegicus (Rat).